The sequence spans 232 residues: tRNA (guanine-N(7)-)-methyltransferase (232 aa).

Residues E38, D63, E90, and D113 each coordinate S-adenosyl-L-methionine. Residue D113 is part of the active site. Substrate is bound by residues K117 and D149.

This sequence belongs to the class I-like SAM-binding methyltransferase superfamily. TrmB family.

The catalysed reaction is guanosine(46) in tRNA + S-adenosyl-L-methionine = N(7)-methylguanosine(46) in tRNA + S-adenosyl-L-homocysteine. It participates in tRNA modification; N(7)-methylguanine-tRNA biosynthesis. Catalyzes the formation of N(7)-methylguanine at position 46 (m7G46) in tRNA. In Syntrophotalea carbinolica (strain DSM 2380 / NBRC 103641 / GraBd1) (Pelobacter carbinolicus), this protein is tRNA (guanine-N(7)-)-methyltransferase.